Reading from the N-terminus, the 413-residue chain is Endoplasmic reticulum resident protein 44.2 (413 aa).

Positions 1-21 (MNLASVLLLLAACHLSVSVNG) are cleaved as a signal peptide. The Thioredoxin domain occupies 22–136 (QEHKEAIELS…LTNFVKFQLS (115 aa)). A disulfide bridge links Cys184 with Cys233. Asn264 is a glycosylation site (N-linked (GlcNAc...) asparagine). The segment at 367–413 (KAARGITDDHEAQAPSTRPIDTTPPPSVFKELKPSDKRYSILQKSEL) is disordered. The span at 396–413 (KELKPSDKRYSILQKSEL) shows a compositional bias: basic and acidic residues. The Prevents secretion from ER signature appears at 410-413 (KSEL).

It localises to the endoplasmic reticulum lumen. In Caenorhabditis elegans, this protein is Endoplasmic reticulum resident protein 44.2.